Consider the following 649-residue polypeptide: Echinoderm microtubule-associated protein-like 2 (649 aa).

A tandem atypical propeller in EMLs region spans residues K10 to A649. WD repeat units follow at residues K56–V93, R97–S144, H151–W192, E195–L234, K241–K280, I285–S323, F369–S406, Q410–T447, L452–V489, K495–P535, F564–Y602, and A609–V648. A coiled-coil region spans residues G65–D106.

This sequence belongs to the WD repeat EMAP family. In terms of assembly, interacts with GRID2 and may also interact with GRID1. Interacts with EML3. Binds unpolymerized tubulins via its WD repeat region.

It localises to the cytoplasm. The protein resides in the cytoskeleton. The protein localises to the spindle. Functionally, tubulin binding protein that inhibits microtubule nucleation and growth, resulting in shorter microtubules. This is Echinoderm microtubule-associated protein-like 2 (Eml2) from Mus musculus (Mouse).